The chain runs to 546 residues: Histidine--tRNA ligase, mitochondrial (546 aa).

The N-terminal 20 residues, 1–20 (MLSRSLNKVVTSIKSSSIIR), are a transit peptide targeting the mitochondrion. Residues 129–131 (DLT), Arg156, Gln172, Asp176, Arg326, and 330–331 (YY) each bind L-histidine.

This sequence belongs to the class-II aminoacyl-tRNA synthetase family.

It is found in the cytoplasm. The protein localises to the mitochondrion. The catalysed reaction is tRNA(His) + L-histidine + ATP = L-histidyl-tRNA(His) + AMP + diphosphate + H(+). In terms of biological role, catalyzes the aminoacylation of histidyl-tRNA in both the cytoplasm and the mitochondrion. In Saccharomyces cerevisiae (strain ATCC 204508 / S288c) (Baker's yeast), this protein is Histidine--tRNA ligase, mitochondrial (HTS1).